A 206-amino-acid polypeptide reads, in one-letter code: MLKVLYVIFTIFGYIWPIYSVMFHLTPNTQKCLKEDIQANQLVMGEYEVSDVPGQIIDYIARDTKGHILSQKEHITKGKFSFMSEVYDAYEICFISKVPPHQRGISQEVSLVTKKGVETKSYEGIGEASKLKPLEVDLKRLEDLSDSIVRDFALMRKREEEMRDTNEKTNSRVLFFSIFSMCCLLGLATWQVLYLRRYFKAKKLIE.

The signal sequence occupies residues 1–20; it reads MLKVLYVIFTIFGYIWPIYS. Over 21-172 the chain is Lumenal; the sequence is VMFHLTPNTQ…RDTNEKTNSR (152 aa). Residues 30-140 form the GOLD domain; that stretch reads QKCLKEDIQA…LKPLEVDLKR (111 aa). Residues 173-193 traverse the membrane as a helical segment; sequence VLFFSIFSMCCLLGLATWQVL. Residues 194–206 lie on the Cytoplasmic side of the membrane; it reads YLRRYFKAKKLIE.

This sequence belongs to the EMP24/GP25L family.

The protein resides in the membrane. Functionally, eca and bai are essential, though not redundant, for dorsoventral patterning of the embryo. Specifically required during early embryogenesis for the activity of maternal tkv, while the zygotic tkv is not affected. The polypeptide is Transmembrane emp24 domain-containing protein bai (Drosophila virilis (Fruit fly)).